A 621-amino-acid polypeptide reads, in one-letter code: Leucine aminopeptidase (621 aa).

Residues 1–73 (MPLLRSSQHI…ISNRKEFRKM (73 aa)) constitute a propeptide that is removed on maturation. A disordered region spans residues 129-152 (SSSGGSGGNGGSAGSSGNGEGGAQ). Gly residues predominate over residues 132–150 (GGSGGNGGSAGSSGNGEGG). Lysine 390, aspartate 395, and lysine 402 together coordinate a peptide. Zn(2+) contacts are provided by lysine 390 and aspartate 395. The interval 400-417 (NLKAAPGSMIDLMKFDMS) is L13 loop. The active site involves lysine 402. The Zn(2+) site is built by aspartate 410, methionine 412, aspartate 415, aspartate 475, and glutamate 477. Positions 415 and 475 each coordinate a peptide. Residue arginine 479 is part of the active site.

Belongs to the peptidase M17 family. In terms of assembly, homohexamer composed of dimer of trimers. Both the identity and concentration of metal ions available dictate the extent to which oligomerization occurs; Mn(2+) and Co(2+) induces oligomerization, whereas Mg(2+) has no effect, and Zn(2+) causes irreversible protein aggregation in vitro. Requires Zn(2+) as cofactor.

Its subcellular location is the cytoplasm. The catalysed reaction is Release of an N-terminal amino acid, Xaa-|-Yaa-, in which Xaa is preferably Leu, but may be other amino acids including Pro although not Arg or Lys, and Yaa may be Pro. Amino acid amides and methyl esters are also readily hydrolyzed, but rates on arylamides are exceedingly low.. It carries out the reaction L-cysteinylglycine + H2O = L-cysteine + glycine. Its activity is regulated as follows. Oligomerization is required for catalytic activity and is metal-dependent. The type of metal that binds the 2 metal binding sites influences catalytic activity and substrate specificity. In vitro, activated by Co(2+), Mn(2+), Ni(2+), Mg(2+) and Zn(2+) with decreasing strength. Occupancy of the site 2 is essential and sufficient for activating the enzyme but occupation of the 2 sites is necessary for full catalytic activity. Inhibited by Ca(2+). Inhibited by fungal metabolite bestatin. Functionally, aminopeptidase which preferentially cleaves leucine residues from the N-terminus of peptides. Also, has some activity towards tryptophan and methionine and has very low activity towards alanine, arginine, asparagine, phenylalanine and tyrosine. No activity towards histidine, serine, valine, isoleucine, glycine, aspartic acid and glutamic acid. In addition, cleaves the Cys-Gly dipeptide, probably as part of the glutathione regulation pathway; cleavage only occurs in the presence of Mn(2+). Plays a role in the final step of host hemoglobin catabolism, by cleaving hemoglobin-derived oligopeptides providing a source of amino acids for the parasite protein synthesis and for the maintenance of osmotic homeostasis. This is Leucine aminopeptidase from Plasmodium vivax (strain Salvador I).